A 334-amino-acid polypeptide reads, in one-letter code: Putative carboxypeptidase VC_A0337 (334 aa).

The active-site Nucleophile is the serine 112. Residues glutamate 234 and histidine 302 each act as charge relay system in the active site.

The protein belongs to the peptidase S66 family.

The chain is Putative carboxypeptidase VC_A0337 from Vibrio cholerae serotype O1 (strain ATCC 39315 / El Tor Inaba N16961).